The primary structure comprises 446 residues: Signal recognition particle protein (446 aa).

Residues 106–113 (GLQGSGKT), 188–192 (DTAGR), and 246–249 (SKLD) contribute to the GTP site.

It belongs to the GTP-binding SRP family. SRP54 subfamily. Part of the signal recognition particle protein translocation system, which is composed of SRP and FtsY.

It is found in the cytoplasm. It carries out the reaction GTP + H2O = GDP + phosphate + H(+). Its function is as follows. Involved in targeting and insertion of nascent membrane proteins into the cytoplasmic membrane. Binds to the hydrophobic signal sequence of the ribosome-nascent chain (RNC) as it emerges from the ribosomes. The SRP-RNC complex is then targeted to the cytoplasmic membrane where it interacts with the SRP receptor FtsY. In Mycoplasma genitalium (strain ATCC 33530 / DSM 19775 / NCTC 10195 / G37) (Mycoplasmoides genitalium), this protein is Signal recognition particle protein.